A 384-amino-acid chain; its full sequence is Sensor-like histidine kinase SenX3 (384 aa).

The Histidine kinase domain maps to Asn153–Pro369. His156 carries the post-translational modification Phosphohistidine; by autocatalysis. Residues Thr360–Arg384 form a disordered region. Residues Pro371–Arg384 show a composition bias toward basic and acidic residues.

In terms of processing, autophosphorylated.

The protein localises to the cell membrane. It catalyses the reaction ATP + protein L-histidine = ADP + protein N-phospho-L-histidine.. Member of the two-component regulatory system SenX3/RegX3 involved in stress response. The system is involved in phosphate starvation response. Probably exhibits a dual role as a phosphatase or a phosphodonor for the response regulator RegX3, depending upon phosphate availability. When environmental phosphate is abundant, SenX3 is required to maintain RegX3 in an unphosphorylated state, where it is unable to bind target DNA. Under conditions of phosphate limitation, SenX3 autophosphorylates and then transfers the phosphate group to RegX3. Probably does not itself sense phosphate concentrations, which may be relayed to SenX3 by the PstSCAB phosphate transporter system. This is Sensor-like histidine kinase SenX3 from Mycolicibacterium smegmatis (strain ATCC 700084 / mc(2)155) (Mycobacterium smegmatis).